Reading from the N-terminus, the 109-residue chain is Small ribosomal subunit protein uS17 (109 aa).

This sequence belongs to the universal ribosomal protein uS17 family. As to quaternary structure, part of the 30S ribosomal subunit.

Its function is as follows. One of the primary rRNA binding proteins, it binds specifically to the 5'-end of 16S ribosomal RNA. This chain is Small ribosomal subunit protein uS17, found in Methanococcus vannielii.